Reading from the N-terminus, the 159-residue chain is Nucleotide-binding protein PSPA7_4966 (159 aa).

It belongs to the YajQ family.

Nucleotide-binding protein. This Pseudomonas paraeruginosa (strain DSM 24068 / PA7) (Pseudomonas aeruginosa (strain PA7)) protein is Nucleotide-binding protein PSPA7_4966.